The primary structure comprises 484 residues: Glutamyl-tRNA(Gln) amidotransferase subunit A (484 aa).

Catalysis depends on charge relay system residues Lys76 and Ser151. The Acyl-ester intermediate role is filled by Ser175.

This sequence belongs to the amidase family. GatA subfamily. Heterotrimer of A, B and C subunits.

It catalyses the reaction L-glutamyl-tRNA(Gln) + L-glutamine + ATP + H2O = L-glutaminyl-tRNA(Gln) + L-glutamate + ADP + phosphate + H(+). Allows the formation of correctly charged Gln-tRNA(Gln) through the transamidation of misacylated Glu-tRNA(Gln) in organisms which lack glutaminyl-tRNA synthetase. The reaction takes place in the presence of glutamine and ATP through an activated gamma-phospho-Glu-tRNA(Gln). This Halorhodospira halophila (strain DSM 244 / SL1) (Ectothiorhodospira halophila (strain DSM 244 / SL1)) protein is Glutamyl-tRNA(Gln) amidotransferase subunit A.